The following is a 2096-amino-acid chain: MCSTPGMPAPGASLALRVSFVDVHPDVIPVQLWGLVGERRGEYLRLSREIQEAAATRGQWALGSASASPGELCLVQVGLLWHRCRVVSRQAQESRVFLLDEGRTITAGAGSLAPGRREFFNLPSEVLGCVLAGLVPAGCGAGSGEPPQHWPADAVDFLSNLQGKEVHGCVLDVLLLHRLVLLEVPDVFQQMRELGLARRVPDSLFRSLLERYLTAATASVGSGVPVLSRVPLKQKQPGLDYFYPQLQLGVTEAVVITQVCHPHRIHCQLRSVSQEIHRLSESMAQVYRGSTGTGDENSTSATWEEREESPDKPGSPCASCGLDGHWYRALLLETFRPQRCAQVLHVDYGRKELVSCSSLRYLLPEYFRMPVVTYPCALYGLWDGGRGWSRSQVGDLKTLILGKAVNAKIEFYCSFEHVYYVSLYGEDGINLNRVFGVQSCCLADRVLQSQATEEEEPETSQSQSPAEEVDEEISLPALRSIRLKMNAFYDAQVEFVKNPSEFWIRLRKHNVTFSKLMRRMCGFYSSASKLDGVVLKPEPDDLCCVKWKENGYYRAIVTKLDDKSVDVFLVDRGNSENVDWYDVRMLLPQFRQLPILAVKCTLADIWPLGKTWSQEAVSFFKKTVLHKELVIHILDKQDHQYVIEILDESRTGEENISKVIAQAGYAKYQEFETKENILVNAHSPGHVSNHFTTESNKIPFAKTGEGEQKAKRENKTTSVSKALSDTTVVTNGSTELVVQEKVKRASVYFPLMQNCLEIKPGSSSKGELEVGSTVEVRVSYVENPGYFWCQLTRNIQGLKTLMSDIQYYCKNTAAPHQRNTLACLAKRTVNRQWSRALISGIQSVEHVNVTFVDYGDREMVSVKNIYSISEEFLKVKAQAFRCSLYNLIQPVGQNPFVWDVKAIQAFNEFIDNAWQKNLELKCTIFALASINEELFNIVDLLTPFQSACHFLVEKRLARPVKLQKPLESSVQLHSYFYSTHDMKIGSEELVYITHIDDPWTFYCQLARNANILEQLSCSITQLSKVLLNLKTSPLNPGTLCLAKYTDGNWYRGIVIEKEPKKVFFVDFGNIYVVTSDDLLPIPSDAYDVLLLPMQAVRCSLSDIPDHIPEEVVVWFQETILDKSLKALVVAKDPDGTLIIELYGDNIQISASINKKLGLLSYKDRIRKKESEVLCSTTETLEEKNENMKLPCTEYLSKSVGYKLPNKEILEESYKPQINSSYKELKLLQSLTKTNLVTQYQDSVGNKNSQVFPLTTEKKEEISAETPLKTARVEATLSERKIGDSCDKDLPLKFCEFPQKTIMPGFKTTVYVSHINDLSDFYVQLIEDEAEISHLSERLNSVKTRPEYYVGPPLQRGDMICAVFPEDNLWYRAVIKEQQPNDLLSVQFIDYGNVSVVHTNKIGRLDLVNAILPGLCIHCSLQGFEVPDNKNSKKMMHYFSQRTSEAAIRCEFVKFQDRWEVILADEHGIIADDMISRYALSEKSQVELSTQVIKSASSKSVNKSDIDTSVFLNWYNPEKKMIRAYATVIDGPEYFWCQFADTEKLQCLEVEVQTAGEQVADRRNCIPCPYIGDPCIVRYREDGHYYRALITNICEDYLVSVRLVDFGNIEDCVDPKALWAIPSELLSVPMQAFPCCLSGFNISEGLCSQEGNDYFYEIITEDVLEITILEIRRDVCDIPLAIVDLKSKGKSINEKMEKYSKTGIKSALPYENIDSEIKQTLGSYNLDVGLKKLSNKAVQNKIYMEQQTDELAEITEKDVNIIGTKPSNFRDPKTDNICEGFENPCKDKIDTEELEGELECHLVDKAEFDDKYLITGFNTLLPHANETKEILELNSLEVPLSPDDESKEFLELESIELQNSLVVDEEKGELSPVPPNVPLSQECVTKGAMELFTLQLPLSCEAEKQPELELPTAQLPLDDKMDPLSLGVSQKAQESMCTEDMRKSSCVESFDDQRRMSLHLHGADCDPKTQNEMNICEEEFVEYKNRDAISALMPLFSEEESSDGSKHNNGLPDHISAQLQNTYTLKAFTVGSKCVVWSSLRNTWSKCEILETAEEGTRVLNLSNGMEEIVNPENVWNGIPKLDKSPPEKRGLEVMEI.

One can recognise a Tudor 1 domain in the interval 65 to 120 (ASASPGELCLVQVGLLWHRCRVVSRQAQESRVFLLDEGRTITAGAGSLAPGRREFF). The disordered stretch occupies residues 287–316 (YRGSTGTGDENSTSATWEEREESPDKPGSP). Residues 288–302 (RGSTGTGDENSTSAT) are compositionally biased toward polar residues. Thr-293 is modified (phosphothreonine). Tudor domains follow at residues 310 to 369 (PDKP…YFRM), 536 to 593 (KPEP…FRQL), 816 to 875 (HQRN…FLKV), 1033 to 1088 (PLNP…AYDV), 1352 to 1411 (PLQR…NAIL), and 1567 to 1626 (CPYI…ELLS). A phosphoserine mark is found at Ser-1722 and Ser-2062. The 59-residue stretch at 2026-2084 (AFTVGSKCVVWSSLRNTWSKCEILETAEEGTRVLNLSNGMEEIVNPENVWNGIPKLDKS) folds into the Tudor 8 domain.

In terms of assembly, found in a mRNP complex (i.e. messenger ribonucleoproteins which correspond to mRNA with bound proteins), at least composed of TDRD1, TDRD6, TDRD7 and DDX4. Found in a complex, at least composed of PIWIL1, PIWIL2, DDX4 and TDRD6. Interacts with Tex19.1 and probably Tex19.2. Interacts with PRMT5. Interacts with SNRPB (when methylated); to trigger spliceosome formation. Post-translationally, undergoes proteolytic cleavage near the C-terminal by an unknown protease during the transition from meiosis I to meiosis II in primary spermatocytes.

The protein resides in the cytoplasm. Functionally, tudor domain-containing protein involved in germ cell development, more specifically the formation of chromatoid body (during spermiogenesis), Balbiani body (during oogenesis), germ plasm (upon fertilization), and for proper miRNA expression and spliceosome maturation. Essential for RNA-dependent helicase UPF1 localization to chromatoid body, for UPF1-UPF2 and UPF1-DDX4 interactions which are required for mRNA degradation, using the extended 3' UTR-triggered nonsense-mediated mRNA decay (NMD) pathway. Involved in spliceosome maturation and mRNA splicing in prophase I spermatocytes through interaction with arginine N-methyltransferase PRMT5 and symmetrically arginine dimethylated SNRPB (small nuclear ribonucleoprotein-associated protein). The sequence is that of Tudor domain-containing protein 6 from Homo sapiens (Human).